The following is a 332-amino-acid chain: D-galactose/methyl-galactoside binding periplasmic protein MglB (332 aa).

The first 23 residues, 1-23, serve as a signal peptide directing secretion; it reads MNKKVLTLSAVMASMLFGAAAHA. Residues aspartate 37 and asparagine 114 each contribute to the beta-D-galactose site. Residues aspartate 37 and asparagine 114 each contribute to the beta-D-glucose site. Ca(2+)-binding residues include aspartate 157, asparagine 159, aspartate 161, glutamine 163, and glutamine 165. Residues histidine 175, aspartate 177, and arginine 181 each contribute to the beta-D-galactose site. Residues histidine 175, aspartate 177, and arginine 181 each coordinate beta-D-glucose. Glutamate 228 is a Ca(2+) binding site. Beta-D-galactose-binding residues include asparagine 234, aspartate 259, and asparagine 279. 3 residues coordinate beta-D-glucose: asparagine 234, aspartate 259, and asparagine 279.

It belongs to the bacterial solute-binding protein 2 family. As to quaternary structure, the ABC transporter complex is composed of one ATP-binding protein (MglA), two transmembrane proteins (MglC) and a solute-binding protein (MglB).

The protein localises to the periplasm. Its function is as follows. Part of the ABC transporter complex MglABC involved in galactose/methyl galactoside import. In addition, binds D-galactose and D-glucose and plays a role in the chemotaxis towards these two sugars by interacting with the Trg chemoreceptor. This is D-galactose/methyl-galactoside binding periplasmic protein MglB (mglB) from Escherichia coli O6:H1 (strain CFT073 / ATCC 700928 / UPEC).